The sequence spans 332 residues: Biotin synthase (332 aa).

One can recognise a Radical SAM core domain in the interval 53–282; that stretch reads HFGKKVKLNM…TKEIRISGGR (230 aa). Residues cysteine 71, cysteine 75, and cysteine 78 each contribute to the [4Fe-4S] cluster site. [2Fe-2S] cluster is bound by residues cysteine 115, cysteine 147, cysteine 207, and arginine 277.

It belongs to the radical SAM superfamily. Biotin synthase family. As to quaternary structure, homodimer. [4Fe-4S] cluster serves as cofactor. It depends on [2Fe-2S] cluster as a cofactor.

The enzyme catalyses (4R,5S)-dethiobiotin + (sulfur carrier)-SH + 2 reduced [2Fe-2S]-[ferredoxin] + 2 S-adenosyl-L-methionine = (sulfur carrier)-H + biotin + 2 5'-deoxyadenosine + 2 L-methionine + 2 oxidized [2Fe-2S]-[ferredoxin]. It participates in cofactor biosynthesis; biotin biosynthesis; biotin from 7,8-diaminononanoate: step 2/2. In terms of biological role, catalyzes the conversion of dethiobiotin (DTB) to biotin by the insertion of a sulfur atom into dethiobiotin via a radical-based mechanism. This chain is Biotin synthase, found in Bacillus cereus (strain ATCC 10987 / NRS 248).